Here is a 237-residue protein sequence, read N- to C-terminus: MFVFILLSLAAVLQQSFGNVDFNSESPRIKAKQREIVDKHNAFRRSVRPTASNMLRMEWYSEAASNAERWAYRCILDHSPKTSRILNGIKCGENIYMSSIPMTWIDIIKLWHDEYKNFIYGVGANPPGSVIGHYTQIVWYKSYRVGCAASYCPPSSYNYFYVCQYCPAGNFAGLTATPYKSGPTCGDCPSACDNGLCTNPCSREDVFMNCKSLVAQSNCQDDYIRKNCPATCFCPNK.

Residues 1-18 form the signal peptide; that stretch reads MFVFILLSLAAVLQQSFG. The region spanning 37–165 is the SCP domain; the sequence is VDKHNAFRRS…SYNYFYVCQY (129 aa). 7 disulfide bridges follow: Cys-74–Cys-152, Cys-91–Cys-166, Cys-147–Cys-163, Cys-185–Cys-192, Cys-188–Cys-197, Cys-201–Cys-234, and Cys-219–Cys-232. In terms of domain architecture, ShKT spans 201–234; it reads CSREDVFMNCKSLVAQSNCQDDYIRKNCPATCFC.

Belongs to the CRISP family. Expressed by the venom gland.

The protein resides in the secreted. Its function is as follows. Weakly blocks contraction of smooth muscle elicited by high potassium-induced depolarization, but does not block caffeine-stimulated contraction. May target voltage-gated calcium channels on smooth muscle. The chain is Cysteine-rich venom protein DIS1 from Dispholidus typus (Boomslang).